The sequence spans 179 residues: Adenine phosphoribosyltransferase (179 aa).

It belongs to the purine/pyrimidine phosphoribosyltransferase family. In terms of assembly, homodimer.

It localises to the cytoplasm. It carries out the reaction AMP + diphosphate = 5-phospho-alpha-D-ribose 1-diphosphate + adenine. The protein operates within purine metabolism; AMP biosynthesis via salvage pathway; AMP from adenine: step 1/1. Catalyzes a salvage reaction resulting in the formation of AMP, that is energically less costly than de novo synthesis. The chain is Adenine phosphoribosyltransferase from Bradyrhizobium sp. (strain BTAi1 / ATCC BAA-1182).